A 74-amino-acid polypeptide reads, in one-letter code: MSALFLAIPLTIFVLFVLPIWLWLHYSNRSGRSELSQSEQQRLAQLADEAKRMRERIQALESILDAEHPNWRDR.

A helical membrane pass occupies residues 4-24 (LFLAIPLTIFVLFVLPIWLWL). The stretch at 33-68 (SELSQSEQQRLAQLADEAKRMRERIQALESILDAEH) forms a coiled coil.

It belongs to the PspB family.

It is found in the cell inner membrane. Functionally, the phage shock protein (psp) operon (pspABCDE) may play a significant role in the competition for survival under nutrient- or energy-limited conditions. PspB is involved in transcription regulation. In Escherichia coli O157:H7, this protein is Phage shock protein B (pspB).